Here is a 221-residue protein sequence, read N- to C-terminus: Ras-related protein Rab-27A (221 aa).

S2 carries the N-acetylserine modification. Residue S2 is modified to Phosphoserine. Residue 16-24 (GDSGVGKTS) participates in GTP binding. An Effector region motif is present at residues 38–46 (FITTVGIDF). GTP-binding positions include 74–78 (DTAGQ), 133–136 (NKSD), and 163–165 (SAA). Residues C123 and C188 are joined by a disulfide bond. Residues C219 and C221 are each lipidated (S-geranylgeranyl cysteine). C221 carries the cysteine methyl ester modification.

This sequence belongs to the small GTPase superfamily. Rab family. As to quaternary structure, binds SYTL1, SLAC2B, MYRIP, SYTL3, SYTL4 and SYTL5. Interacts with RPH3A and RPH3A. Binds MLPH and SYTL2. Interacts with UNC13D. Does not interact with the BLOC-3 complex (heterodimer of HPS1 and HPS4). Interacts (GDP-bound form preferentially) with DENND10.

The protein localises to the membrane. It localises to the melanosome. Its subcellular location is the late endosome. It is found in the lysosome. The enzyme catalyses GTP + H2O = GDP + phosphate + H(+). With respect to regulation, regulated by guanine nucleotide exchange factors (GEFs) which promote the exchange of bound GDP for free GTP, GTPase activating proteins (GAPs) which increase the GTP hydrolysis activity, and GDP dissociation inhibitors which inhibit the dissociation of the nucleotide from the GTPase. Activated by GEFs such as DENND10. Small GTPase which cycles between active GTP-bound and inactive GDP-bound states. In its active state, binds to a variety of effector proteins to regulate homeostasis of late endocytic pathway, including endosomal positioning, maturation and secretion. Plays a role in cytotoxic granule exocytosis in lymphocytes. Required for both granule maturation and granule docking and priming at the immunologic synapse. The polypeptide is Ras-related protein Rab-27A (RAB27A) (Canis lupus familiaris (Dog)).